The chain runs to 89 residues: MGDVVATIKVMPESPDVDLEALKKEIQERIPEGTELHKIDEEPIAFGLVALNVMVVVGDAEGGTEAAEESLSGIEGVSNIEVTDVRRLM.

The protein belongs to the EF-1-beta/EF-1-delta family.

Functionally, promotes the exchange of GDP for GTP in EF-1-alpha/GDP, thus allowing the regeneration of EF-1-alpha/GTP that could then be used to form the ternary complex EF-1-alpha/GTP/AAtRNA. This chain is Elongation factor 1-beta (ef1b), found in Methanothermobacter thermautotrophicus (strain ATCC 29096 / DSM 1053 / JCM 10044 / NBRC 100330 / Delta H) (Methanobacterium thermoautotrophicum).